We begin with the raw amino-acid sequence, 479 residues long: MNRNPDHNTLPNITLKIIETYLGRLPSVNEYYMLKLQTRNIQKITVFNKDIFVSLVKKNKKRFFSDVDTSASEIKDRILSYFSKQTQTYNIGKLFTIIELQSVLVTTYTDILGVLTIKAPNVISSKISYNVTSMEELARDMLNSMNVAVIDKAKVMGRHNVSSLVKNVNKLMEEYLRRHNKSCICYGSYSLYLINPNIRYGDIDILQTNSRTFLIDLAFLIKFITGNNIILSKIPYLRNYMVIKDENDNHIIDSFNIRQDTMNVVPKIFIDNIYIVDPTFQLLNMIKMFSQIDRLEDLSKDPEKFNARMATMLEYVRYTHGIVFDGKRNNIPMKCIIDENNRIVTVTTKDYFSFKKCLAYLDENVLSSDILDLNADTSCDFESVTNSVYLIHDNIMYTYFSNTILLSDKGKVHEISARGLCAHILLYQMLTSGEYKQCLSDLLNSMMNRDKIPIYSHTERDKKPGRHGFINIEKDIIVF.

Catalysis depends on residues Asp202 and Asp204. Ca(2+) contacts are provided by Asp202, Asp204, and Asp253.

It belongs to the poxviridae poly(A) polymerase catalytic subunit family. As to quaternary structure, heterodimer of a large (catalytic) subunit and a small (regulatory) subunit.

The catalysed reaction is RNA(n) + ATP = RNA(n)-3'-adenine ribonucleotide + diphosphate. In terms of biological role, polymerase that creates the 3'-poly(A) tail of mRNA's. In Camelus, this protein is Poly(A) polymerase catalytic subunit (OPG063).